The sequence spans 357 residues: Spore wall and anchoring disk complex protein EnP1 (357 aa).

The first 16 residues, 1 to 16 (MKLLGFLIVGLSAISA), serve as a signal peptide directing secretion. Asparagine 47 carries an N-linked (GlcNAc...) asparagine glycan. The HBM1 motif lies at 150-158 (ERRPHYKKI). Positions 329–334 (LKKVRG) match the HBM2 motif.

The protein resides in the spore wall. It is found in the spore. The protein localises to the perispore. Functionally, spore wall protein involved in the adhesion to host cells surface glycoaminoglycans (GAGs). Microsporidian spore adherence is an integral part of activation and host cell invasion which requires the extrusion at the spore apex of a very long and coiled structure, the polar tube, through which the sporoplasm is pushed to enter into the potential host cell. The sequence is that of Spore wall and anchoring disk complex protein EnP1 (EnP1) from Encephalitozoon cuniculi (strain GB-M1) (Microsporidian parasite).